The following is a 237-amino-acid chain: Ribosomal RNA small subunit methyltransferase G (237 aa).

Residues G78, F83, 129–130, and R148 contribute to the S-adenosyl-L-methionine site; that span reads AE.

This sequence belongs to the methyltransferase superfamily. RNA methyltransferase RsmG family.

It localises to the cytoplasm. Its function is as follows. Specifically methylates the N7 position of a guanine in 16S rRNA. This Streptococcus pyogenes serotype M12 (strain MGAS2096) protein is Ribosomal RNA small subunit methyltransferase G.